The following is a 91-amino-acid chain: Small ribosomal subunit protein bS18 (91 aa).

The segment at 1-27 is disordered; the sequence is MTQQSNTERKPRAKGPKRPRKPKVDPF. Residues 11-21 show a composition bias toward basic residues; it reads PRAKGPKRPRK.

Belongs to the bacterial ribosomal protein bS18 family. In terms of assembly, part of the 30S ribosomal subunit. Forms a tight heterodimer with protein bS6.

Functionally, binds as a heterodimer with protein bS6 to the central domain of the 16S rRNA, where it helps stabilize the platform of the 30S subunit. The protein is Small ribosomal subunit protein bS18 of Deinococcus geothermalis (strain DSM 11300 / CIP 105573 / AG-3a).